We begin with the raw amino-acid sequence, 210 residues long: Probable nicotinate-nucleotide adenylyltransferase (210 aa).

It belongs to the NadD family.

It catalyses the reaction nicotinate beta-D-ribonucleotide + ATP + H(+) = deamido-NAD(+) + diphosphate. It functions in the pathway cofactor biosynthesis; NAD(+) biosynthesis; deamido-NAD(+) from nicotinate D-ribonucleotide: step 1/1. Catalyzes the reversible adenylation of nicotinate mononucleotide (NaMN) to nicotinic acid adenine dinucleotide (NaAD). The chain is Probable nicotinate-nucleotide adenylyltransferase from Methylococcus capsulatus (strain ATCC 33009 / NCIMB 11132 / Bath).